The sequence spans 57 residues: Small ribosomal subunit protein bS21 (57 aa).

A disordered region spans residues 22–57 (QCSKSGVLSEAKKRKHYEKPSEKRKRKATEKRNSRK). The segment covering 33–57 (KKRKHYEKPSEKRKRKATEKRNSRK) has biased composition (basic residues).

This sequence belongs to the bacterial ribosomal protein bS21 family.

The protein is Small ribosomal subunit protein bS21 of Natranaerobius thermophilus (strain ATCC BAA-1301 / DSM 18059 / JW/NM-WN-LF).